We begin with the raw amino-acid sequence, 127 residues long: Protein ApaG (127 aa).

The 125-residue stretch at aspartate 3 to histidine 127 folds into the ApaG domain.

This is Protein ApaG from Xanthomonas euvesicatoria pv. vesicatoria (strain 85-10) (Xanthomonas campestris pv. vesicatoria).